Here is a 73-residue protein sequence, read N- to C-terminus: uncharacterized protein (73 aa).

This is an uncharacterized protein from Sinorhizobium fredii (strain NBRC 101917 / NGR234).